The following is a 110-amino-acid chain: Large ribosomal subunit protein uL22 (110 aa).

It belongs to the universal ribosomal protein uL22 family. Part of the 50S ribosomal subunit.

In terms of biological role, this protein binds specifically to 23S rRNA; its binding is stimulated by other ribosomal proteins, e.g. L4, L17, and L20. It is important during the early stages of 50S assembly. It makes multiple contacts with different domains of the 23S rRNA in the assembled 50S subunit and ribosome. The globular domain of the protein is located near the polypeptide exit tunnel on the outside of the subunit, while an extended beta-hairpin is found that lines the wall of the exit tunnel in the center of the 70S ribosome. The polypeptide is Large ribosomal subunit protein uL22 (Histophilus somni (strain 2336) (Haemophilus somnus)).